We begin with the raw amino-acid sequence, 275 residues long: Methylthioribulose-1-phosphate dehydratase (275 aa).

Cys-125 lines the substrate pocket. Residues His-143 and His-145 each coordinate Zn(2+). Glu-168 acts as the Proton donor/acceptor in catalysis. His-233 is a Zn(2+) binding site.

This sequence belongs to the aldolase class II family. MtnB subfamily. The cofactor is Zn(2+).

The protein resides in the cytoplasm. It carries out the reaction 5-(methylsulfanyl)-D-ribulose 1-phosphate = 5-methylsulfanyl-2,3-dioxopentyl phosphate + H2O. The protein operates within amino-acid biosynthesis; L-methionine biosynthesis via salvage pathway; L-methionine from S-methyl-5-thio-alpha-D-ribose 1-phosphate: step 2/6. In terms of biological role, catalyzes the dehydration of methylthioribulose-1-phosphate (MTRu-1-P) into 2,3-diketo-5-methylthiopentyl-1-phosphate (DK-MTP-1-P). The protein is Methylthioribulose-1-phosphate dehydratase of Lodderomyces elongisporus (strain ATCC 11503 / CBS 2605 / JCM 1781 / NBRC 1676 / NRRL YB-4239) (Yeast).